The following is a 1790-amino-acid chain: E3 ubiquitin-protein ligase RBBP6 (1790 aa).

The 73-residue stretch at 4-76 (VHYKFSSKLN…NSSVIVRRIP (73 aa)) folds into the DWNN domain. Lys-130 is subject to N6-acetyllysine. Residues 160–177 (YTCFRCGKPGHYIKNCPT) form a CCHC-type zinc finger. Phosphoserine occurs at positions 245, 246, 247, and 248. The RING-type; degenerate zinc-finger motif lies at 260-301 (CLICKDIMTDAVVIPCCGNSYCDECIRTALLESDEHTCPTCH). Residues 329 to 353 (YTKRLRKQLPPPPPPVPPPRPLMQR) form a disordered region. A compositionally biased stretch (pro residues) spans 337-349 (LPPPPPPVPPPRP). Ser-361 carries the post-translational modification Phosphoserine. Residues 374–408 (VTSSSAHSAPSISSLTSNPSALAPSVSGNPSSAPA) form a disordered region. A compositionally biased stretch (low complexity) spans 376–390 (SSSAHSAPSISSLTS). Ser-517 is modified (phosphoserine). Disordered regions lie at residues 533-599 (INRG…AGYS), 622-641 (QTAH…SREE), 648-667 (RLKE…NDFA), and 675-797 (KIQK…REYF). Over residues 558-599 (VPVPPPPLYPPPPHTLPLPPGVPPPQFSPQFPPGQPPPAGYS) the composition is skewed to pro residues. The span at 622–635 (QTAHSNTIPTTQAP) shows a compositional bias: polar residues. A compositionally biased stretch (low complexity) spans 686-720 (RSKSPYSGSSYSRSSYTYSKSRSGSTRSRSYSRSF). The span at 736–771 (RRGRGKSRNYRSRSRSHGYHRSRSRSPPYRRYHSRS) shows a compositional bias: basic residues. 7 positions are modified to phosphoserine: Ser-769, Ser-771, Ser-773, Ser-781, Ser-816, Ser-862, and Ser-874. Disordered regions lie at residues 850-1292 (AQPR…TKRT) and 1322-1790 (WDKD…SVTV). A compositionally biased stretch (basic and acidic residues) spans 903-923 (LSTRDSHNAKDNPKSKEKESE). Residues 932–941 (NKHKKHRKRR) show a composition bias toward basic residues. 5 stretches are compositionally biased toward basic and acidic residues: residues 956–972 (ETSR…ETKT), 980–991 (SRDDATPVRDEP), 1002–1018 (VSDK…VKSD), 1042–1072 (PQEK…KIDS), and 1096–1161 (SAKE…KDFE). Ser-958 carries the phosphoserine modification. The tract at residues 983 to 1139 (DATPVRDEPM…KAKKPEKNKL (157 aa)) is interaction with RB1. Phosphothreonine is present on Thr-985. Residues Lys-1107 and Lys-1169 each participate in a glycyl lysine isopeptide (Lys-Gly) (interchain with G-Cter in SUMO2) cross-link. Ser-1179 bears the Phosphoserine mark. 2 stretches are compositionally biased toward basic and acidic residues: residues 1182 to 1200 (RKME…KDKI) and 1231 to 1249 (EPSE…EKVK). The segment covering 1260 to 1277 (EGSSSTLVDYTSTSSTGG) has biased composition (polar residues). Thr-1272 bears the Phosphothreonine mark. Residue Ser-1278 is modified to Phosphoserine. The segment covering 1281-1291 (RKSEEKTDTKR) has biased composition (basic and acidic residues). A phosphoserine mark is found at Ser-1329, Ser-1342, and Ser-1348. Polar residues predominate over residues 1336 to 1358 (TTQPIQSVGKPSSIIKNVTTKPS). Composition is skewed to basic and acidic residues over residues 1363–1392 (YTEK…ELRS), 1400–1440 (EKGR…EQGH), 1449–1460 (KETRTSEKHESV), 1469–1507 (TPGR…RGKE), and 1515–1580 (KLRE…RNGK). An interaction with p53 region spans residues 1434-1544 (RLSEQGHFKT…SPPRDKKPHD (111 aa)). Position 1469 is a phosphothreonine (Thr-1469). The span at 1618-1627 (LSHSSRLSSD) shows a compositional bias: polar residues. Residues 1634 to 1646 (EAAFEPDYNESDS) show a composition bias toward acidic residues. Phosphoserine is present on residues Ser-1646, Ser-1648, and Ser-1651. Over residues 1663-1675 (KDLKEKTTEKAKE) the composition is skewed to basic and acidic residues. The segment covering 1689–1724 (RSQSQSSPSVSPSRSHSPSGSQTRSHSSSASSAGSQ) has biased composition (low complexity). Basic residues predominate over residues 1727-1750 (KKKKKKKEKKKHKKHKKHKKHKKH). The segment covering 1751–1760 (AGADGDVEKS) has biased composition (basic and acidic residues). Residues 1761-1773 (QKHKHKKKKAKKN) are compositionally biased toward basic residues. The segment covering 1774-1790 (KDKEKEKDDQKVRSVTV) has biased composition (basic and acidic residues).

In terms of assembly, interacts with MDM2 and YBX1. Also interacts with p53/TP53 and RB1. Interacts with NEK6. Interacts with ZBTB38. Post-translationally, phosphorylated by NEK6. In terms of tissue distribution, highly expressed in testis. Expressed at lower levels in brain, heart, kidney, liver, lung, skeletal muscle, spleen, thymus and tongue.

It is found in the nucleus. The protein localises to the nucleolus. Its subcellular location is the chromosome. It localises to the cytoplasm. The protein resides in the cytoskeleton. It is found in the microtubule organizing center. The protein localises to the centrosome. The enzyme catalyses S-ubiquitinyl-[E2 ubiquitin-conjugating enzyme]-L-cysteine + [acceptor protein]-L-lysine = [E2 ubiquitin-conjugating enzyme]-L-cysteine + N(6)-ubiquitinyl-[acceptor protein]-L-lysine.. The protein operates within protein modification; protein ubiquitination. In terms of biological role, E3 ubiquitin-protein ligase which promotes ubiquitination of YBX1, leading to its degradation by the proteasome. May play a role as a scaffold protein to promote the assembly of the p53/TP53-MDM2 complex, resulting in increase of MDM2-mediated ubiquitination and degradation of p53/TP53; may function as negative regulator of p53/TP53, leading to both apoptosis and cell growth retardation. Regulates DNA-replication and common fragile sites (CFS) stability in a ZBTB38- and MCM10-dependent manner. Controls ZBTB38 protein stability and abundance via ubiquitination and proteasomal degradation, and ZBTB38 in turn negatively regulates the expression of MCM10 which plays an important role in DNA-replication. This chain is E3 ubiquitin-protein ligase RBBP6 (Rbbp6), found in Mus musculus (Mouse).